Reading from the N-terminus, the 486-residue chain is UDP-N-acetylmuramoyl-L-alanyl-D-glutamate--2,6-diaminopimelate ligase (486 aa).

Ser34 is a UDP-N-acetyl-alpha-D-muramoyl-L-alanyl-D-glutamate binding site. 112 to 118 lines the ATP pocket; sequence GTAGKTS. Residues 154-155, Ser181, Gln187, and Arg189 each bind UDP-N-acetyl-alpha-D-muramoyl-L-alanyl-D-glutamate; that span reads TT. Lys221 bears the N6-carboxylysine mark. Residues Arg385, 409–412, Gly457, and Glu461 contribute to the meso-2,6-diaminopimelate site; that span reads DNPR. The short motif at 409–412 is the Meso-diaminopimelate recognition motif element; that stretch reads DNPR.

It belongs to the MurCDEF family. MurE subfamily. Requires Mg(2+) as cofactor. Post-translationally, carboxylation is probably crucial for Mg(2+) binding and, consequently, for the gamma-phosphate positioning of ATP.

Its subcellular location is the cytoplasm. It catalyses the reaction UDP-N-acetyl-alpha-D-muramoyl-L-alanyl-D-glutamate + meso-2,6-diaminopimelate + ATP = UDP-N-acetyl-alpha-D-muramoyl-L-alanyl-gamma-D-glutamyl-meso-2,6-diaminopimelate + ADP + phosphate + H(+). Its pathway is cell wall biogenesis; peptidoglycan biosynthesis. Catalyzes the addition of meso-diaminopimelic acid to the nucleotide precursor UDP-N-acetylmuramoyl-L-alanyl-D-glutamate (UMAG) in the biosynthesis of bacterial cell-wall peptidoglycan. This chain is UDP-N-acetylmuramoyl-L-alanyl-D-glutamate--2,6-diaminopimelate ligase, found in Rhizobium meliloti (strain 1021) (Ensifer meliloti).